Here is a 151-residue protein sequence, read N- to C-terminus: Actin-depolymerizing factor 10 (151 aa).

The region spanning 15-149 is the ADF-H domain; the sequence is PAWIEVPEKS…DLEVLRGRAN (135 aa).

This sequence belongs to the actin-binding proteins ADF family.

Functionally, actin-depolymerizing protein. Severs actin filaments (F-actin) and binds to actin monomers. In Oryza sativa subsp. japonica (Rice), this protein is Actin-depolymerizing factor 10 (ADF10).